Reading from the N-terminus, the 162-residue chain is 2-C-methyl-D-erythritol 2,4-cyclodiphosphate synthase (162 aa).

The a divalent metal cation site is built by D10 and H12. 4-CDP-2-C-methyl-D-erythritol 2-phosphate is bound by residues 10-12 (DVH) and 36-37 (HS). H44 lines the a divalent metal cation pocket. 4-CDP-2-C-methyl-D-erythritol 2-phosphate-binding positions include 58–60 (DIG), 63–67 (FPDTD), and R144.

This sequence belongs to the IspF family. Homotrimer. A divalent metal cation serves as cofactor.

It carries out the reaction 4-CDP-2-C-methyl-D-erythritol 2-phosphate = 2-C-methyl-D-erythritol 2,4-cyclic diphosphate + CMP. It functions in the pathway isoprenoid biosynthesis; isopentenyl diphosphate biosynthesis via DXP pathway; isopentenyl diphosphate from 1-deoxy-D-xylulose 5-phosphate: step 4/6. Its function is as follows. Involved in the biosynthesis of isopentenyl diphosphate (IPP) and dimethylallyl diphosphate (DMAPP), two major building blocks of isoprenoid compounds. Catalyzes the conversion of 4-diphosphocytidyl-2-C-methyl-D-erythritol 2-phosphate (CDP-ME2P) to 2-C-methyl-D-erythritol 2,4-cyclodiphosphate (ME-CPP) with a corresponding release of cytidine 5-monophosphate (CMP). In Laribacter hongkongensis (strain HLHK9), this protein is 2-C-methyl-D-erythritol 2,4-cyclodiphosphate synthase.